Reading from the N-terminus, the 204-residue chain is Photosynthetic NDH subunit of subcomplex B 3, chloroplastic (204 aa).

Disordered regions lie at residues 1-24 and 45-68; these read MGSV…FSHK and KTVR…DEPP. The N-terminal 48 residues, 1-48, are a transit peptide targeting the chloroplast; it reads MGSVQLSGSGLVASLPPNHSFSHKTKLNKPNSYFFRSKHNAARTKTVR. Residues 76–180 form the 2Fe-2S ferredoxin-type domain; it reads HSVLLPDGTP…STGLVVIQQL (105 aa). Positions 120, 126, 129, and 162 each coordinate [2Fe-2S] cluster.

As to quaternary structure, part of the chloroplast NDH complex, composed of a mixture of chloroplast and nucleus encoded subunits. Component of the NDH subcomplex B, at least composed of PnsB1, PnsB2, PnsB3, PnsB4 and PnsB5.

The protein resides in the plastid. It localises to the chloroplast thylakoid membrane. NDH shuttles electrons from NAD(P)H:plastoquinone, via FMN and iron-sulfur (Fe-S) centers, to quinones in the photosynthetic chain and possibly in a chloroplast respiratory chain. The immediate electron acceptor for the enzyme in this species is believed to be plastoquinone. Couples the redox reaction to proton translocation, and thus conserves the redox energy in a proton gradient. The protein is Photosynthetic NDH subunit of subcomplex B 3, chloroplastic of Arabidopsis thaliana (Mouse-ear cress).